Here is a 351-residue protein sequence, read N- to C-terminus: Putative F-box protein At4g09790 (351 aa).

The F-box domain occupies 1–51 (MTTICDLPRDLVARILSRVPLTSMRRVRFTCKRWNTISKDPSFAKTHFGKA).

The sequence is that of Putative F-box protein At4g09790 from Arabidopsis thaliana (Mouse-ear cress).